A 240-amino-acid chain; its full sequence is Probable transcriptional regulatory protein BLi02909/BL01150 (240 aa).

Residues 1–14 are compositionally biased toward basic residues; it reads MAGHSKWKNIQRRK. The interval 1–21 is disordered; it reads MAGHSKWKNIQRRKNAQDAKR.

The protein belongs to the TACO1 family.

It localises to the cytoplasm. The sequence is that of Probable transcriptional regulatory protein BLi02909/BL01150 from Bacillus licheniformis (strain ATCC 14580 / DSM 13 / JCM 2505 / CCUG 7422 / NBRC 12200 / NCIMB 9375 / NCTC 10341 / NRRL NRS-1264 / Gibson 46).